A 41-amino-acid chain; its full sequence is Large ribosomal subunit protein bL36 (41 aa).

The protein belongs to the bacterial ribosomal protein bL36 family.

In Rickettsia prowazekii (strain Madrid E), this protein is Large ribosomal subunit protein bL36.